A 522-amino-acid chain; its full sequence is BTB/POZ domain-containing protein 3 (522 aa).

The interval 25–44 (RSKKSSKKANTSSSSSNSSK) is disordered. Positions 32–44 (KANTSSSSSNSSK) are enriched in low complexity. Residues 120 to 190 (ADVHFVVGPP…IYCDEIDLAA (71 aa)) form the BTB domain. The 66-residue stretch at 235-300 (FEEPDLTQRC…NWAEVECQRQ (66 aa)) folds into the BACK domain.

Its subcellular location is the cytoplasm. The protein localises to the cytosol. It localises to the nucleus. In terms of biological role, acts as a key regulator of dendritic field orientation during development of sensory cortex. Also directs dendrites toward active axon terminals when ectopically expressed. The polypeptide is BTB/POZ domain-containing protein 3 (BTBD3) (Homo sapiens (Human)).